The sequence spans 122 residues: Large ribosomal subunit protein uL18 (122 aa).

A disordered region spans residues 1-27 (MSNLSRKQQTQKRHRRLRRHLNGTAQR). Residues 9–21 (QTQKRHRRLRRHL) are compositionally biased toward basic residues.

This sequence belongs to the universal ribosomal protein uL18 family. As to quaternary structure, part of the 50S ribosomal subunit; part of the 5S rRNA/L5/L18/L25 subcomplex. Contacts the 5S and 23S rRNAs.

Its function is as follows. This is one of the proteins that bind and probably mediate the attachment of the 5S RNA into the large ribosomal subunit, where it forms part of the central protuberance. The chain is Large ribosomal subunit protein uL18 from Prochlorococcus marinus (strain MIT 9303).